Consider the following 477-residue polypeptide: Probable cytosol aminopeptidase (477 aa).

Residues Lys-245 and Asp-250 each coordinate Mn(2+). Lys-257 is an active-site residue. Residues Asp-268, Asp-327, and Glu-329 each contribute to the Mn(2+) site. Arg-331 is a catalytic residue.

Belongs to the peptidase M17 family. Mn(2+) serves as cofactor.

The protein resides in the cytoplasm. The enzyme catalyses Release of an N-terminal amino acid, Xaa-|-Yaa-, in which Xaa is preferably Leu, but may be other amino acids including Pro although not Arg or Lys, and Yaa may be Pro. Amino acid amides and methyl esters are also readily hydrolyzed, but rates on arylamides are exceedingly low.. It carries out the reaction Release of an N-terminal amino acid, preferentially leucine, but not glutamic or aspartic acids.. In terms of biological role, presumably involved in the processing and regular turnover of intracellular proteins. Catalyzes the removal of unsubstituted N-terminal amino acids from various peptides. This Exiguobacterium sibiricum (strain DSM 17290 / CCUG 55495 / CIP 109462 / JCM 13490 / 255-15) protein is Probable cytosol aminopeptidase.